A 1104-amino-acid chain; its full sequence is A disintegrin and metalloproteinase with thrombospondin motifs 10 (1104 aa).

Positions 1–25 are cleaved as a signal peptide; sequence MASACQILRWALALGLGLTFKVTHA. Residues 26 to 233 constitute a propeptide that is removed on maturation; it reads FRSQDELLSS…SERGQLGLKR (208 aa). N-linked (GlcNAc...) asparagine glycans are attached at residues Asn-90 and Asn-222. In terms of domain architecture, Peptidase M12B spans 239–457; that stretch reads RYVETLVVAD…GLGLCLNNRP (219 aa). Cystine bridges form between Cys-315/Cys-376, Cys-351/Cys-358, Cys-370/Cys-452, Cys-409/Cys-436, Cys-479/Cys-501, Cys-490/Cys-508, Cys-496/Cys-531, Cys-521/Cys-536, Cys-559/Cys-596, Cys-563/Cys-601, and Cys-574/Cys-586. His-392 provides a ligand contact to Zn(2+). Residue Glu-393 is part of the active site. The Zn(2+) site is built by His-396 and His-402. The 87-residue stretch at 460 to 546 folds into the Disintegrin domain; the sequence is QDFVYPTVAP…VPFGSRPEGV (87 aa). The TSP type-1 1 domain maps to 547-602; the sequence is DGAWGPWTPWGDCSRSCGGGVSSSSRHCDSPRPTIGGKYCLGERRRHRSCNTNDCP. The spacer stretch occupies residues 706-818; that stretch reads ETIEGVFSPA…PALHYRFNAP (113 aa). Residues Asn-740 and Asn-795 are each glycosylated (N-linked (GlcNAc...) asparagine). TSP type-1 domains lie at 825–885, 888–943, 944–1003, and 1004–1058; these read PPYS…EPCP, WVVG…QGPM, CPPE…RRCP, and PARW…AKCD. 3 cysteine pairs are disulfide-bonded: Cys-837-Cys-879, Cys-841-Cys-884, and Cys-852-Cys-866. A glycan (N-linked (GlcNAc...) asparagine) is linked at Asn-892. Residues 1066-1104 form the PLAC domain; the sequence is GPEECKDVNKVAYCPLVLKFQFCSRAYFRQMCCKTCQGR.

As to quaternary structure, interacts with FBN1; this interaction promotes microfibrils assembly. Zn(2+) is required as a cofactor. In terms of processing, glycosylated. Can be O-fucosylated by POFUT2 on a serine or a threonine residue found within the consensus sequence C1-X(2)-(S/T)-C2-G of the TSP type-1 repeat domains where C1 and C2 are the first and second cysteine residue of the repeat, respectively. Fucosylated repeats can then be further glycosylated by the addition of a beta-1,3-glucose residue by the glucosyltransferase, B3GALTL. Fucosylation mediates the efficient secretion of ADAMTS family members. Can also be C-glycosylated with one or two mannose molecules on tryptophan residues within the consensus sequence W-X-X-W of the TPRs, and N-glycosylated. These other glycosylations can also facilitate secretion. In terms of tissue distribution, widely expressed in adult tissues.

It localises to the secreted. The protein resides in the extracellular space. Its subcellular location is the extracellular matrix. Functionally, metalloprotease that participate in microfibrils assembly. Microfibrils are extracellular matrix components occurring independently or along with elastin in the formation of elastic tissues. This is A disintegrin and metalloproteinase with thrombospondin motifs 10 (Adamts10) from Mus musculus (Mouse).